Reading from the N-terminus, the 96-residue chain is Large ribosomal subunit protein bL27 (96 aa).

Residues 1-11 (MLKTLENLQLF) constitute a propeptide that is removed on maturation. The segment at 13 to 36 (HKKGGGSTSNGRDSQAKRLGAKAA) is disordered.

Belongs to the bacterial ribosomal protein bL27 family. Post-translationally, the N-terminus is cleaved by ribosomal processing cysteine protease Prp.

The chain is Large ribosomal subunit protein bL27 from Streptococcus thermophilus (strain CNRZ 1066).